A 486-amino-acid chain; its full sequence is MLEKEFFTEYGEASQYQIQEVVGKGSYGVVASAECPHTGGKVAIKKMTNVFEHVSDAIRILREIKLLRLLRHPDIVEIKHIMLPPCRKEFKDIYVVFELMESDLHHVLKVNDDLTPQHHQFFLYQLLRGLKFMHSAHVFHRDLKPKNILANADCKIKICDLGLARVSFTDSPSAVFWTDYVATRWYRAPELCGSFYSNYTPAIDMWSVGCIFAEMLTGKPLFPGKNVVHQLELVTDLLGTPSPITLSRIRNEKARKYLGNMRRKDPVPFTHKFPNIDPVALKLLQRLIAFDPKDRPSAEEALADPYFQGLANVDYEPSRQPISKLEFEFERRKLTRDDVRELMYREILEYHPQMLQEYLQGEENINSHFLYPSGVDQFKQEFARLEEHNDDEEEHNSPPHQRKYTSLPRERVCSSEDEGSDSVHAQSSSASVVFTPPQTPNTATGLSSQKASQVDKAATPVKRSACLMRSDSICASRCVGVSSAVS.

A Protein kinase domain is found at 16–307; the sequence is YQIQEVVGKG…AEEALADPYF (292 aa). ATP-binding positions include 22 to 30 and lysine 45; that span reads VGKGSYGVV. The active-site Proton acceptor is aspartate 142. Threonine 178 is subject to Phosphothreonine. The TXY signature appears at 178 to 180; that stretch reads TDY. Position 180 is a phosphotyrosine (tyrosine 180). Residue threonine 183 is modified to Phosphothreonine. The segment at 386 to 455 is disordered; that stretch reads EEHNDDEEEH…LSSQKASQVD (70 aa). A compositionally biased stretch (low complexity) spans 422-433; that stretch reads SVHAQSSSASVV. Residues 440-452 are compositionally biased toward polar residues; that stretch reads PNTATGLSSQKAS.

The protein belongs to the protein kinase superfamily. CMGC Ser/Thr protein kinase family. MAP kinase subfamily. Dually phosphorylated on Thr-178 and Tyr-180, which activates the enzyme.

It carries out the reaction L-seryl-[protein] + ATP = O-phospho-L-seryl-[protein] + ADP + H(+). It catalyses the reaction L-threonyl-[protein] + ATP = O-phospho-L-threonyl-[protein] + ADP + H(+). With respect to regulation, activated by threonine and tyrosine phosphorylation. The sequence is that of Mitogen-activated protein kinase 17 (MPK17) from Arabidopsis thaliana (Mouse-ear cress).